The following is a 133-amino-acid chain: ATP synthase epsilon chain (133 aa).

This sequence belongs to the ATPase epsilon chain family. F-type ATPases have 2 components, CF(1) - the catalytic core - and CF(0) - the membrane proton channel. CF(1) has five subunits: alpha(3), beta(3), gamma(1), delta(1), epsilon(1). CF(0) has three main subunits: a, b and c.

It is found in the cell membrane. Functionally, produces ATP from ADP in the presence of a proton gradient across the membrane. The sequence is that of ATP synthase epsilon chain from Clostridium botulinum (strain Langeland / NCTC 10281 / Type F).